Reading from the N-terminus, the 453-residue chain is UPF0210 protein Mbar_A3181 (453 aa).

The protein belongs to the UPF0210 family.

The protein is UPF0210 protein Mbar_A3181 of Methanosarcina barkeri (strain Fusaro / DSM 804).